The chain runs to 307 residues: Isethionate sulfite-lyase activating enzyme (307 aa).

The Radical SAM core domain occupies 22–307 (HDGPGIRTVV…EAVVAQTADS (286 aa)). Positions 36, 40, 43, 62, 68, 71, 75, 95, 98, 102, and 106 each coordinate [4Fe-4S] cluster. 42 to 44 (WCS) is an S-adenosyl-L-methionine binding site. 2 4Fe-4S ferredoxin-type domains span residues 53 to 85 (VELAYNTGRCLTLAKCVRCVEICTAGAISRAED) and 86 to 117 (DTISIDRALCNDCEQLCSGACPSNALITYGAH). S-adenosyl-L-methionine is bound by residues glycine 146, 195–197 (DIK), and histidine 268.

This sequence belongs to the organic radical-activating enzymes family. In terms of assembly, monomer. [4Fe-4S] cluster serves as cofactor.

The enzyme catalyses glycyl-[protein] + reduced [flavodoxin] + S-adenosyl-L-methionine = glycin-2-yl radical-[protein] + semiquinone [flavodoxin] + 5'-deoxyadenosine + L-methionine + H(+). The protein operates within organosulfur degradation; alkanesulfonate degradation. Its function is as follows. Involved in an anaerobic respiration pathway that converts the sulfonate isethionate (2-hydroxyethanesulfonate) to ammonia, acetate and sulfide. Catalyzes activation of the isethionate sulfite-lyase IseG under anaerobic conditions by generation of an organic free radical on a glycine residue, via a homolytic cleavage of S-adenosyl-L-methionine (SAM). The sequence is that of Isethionate sulfite-lyase activating enzyme from Nitratidesulfovibrio vulgaris (strain ATCC 29579 / DSM 644 / CCUG 34227 / NCIMB 8303 / VKM B-1760 / Hildenborough) (Desulfovibrio vulgaris).